A 5538-amino-acid chain; its full sequence is Leashin (5538 aa).

Positions 1–10 are enriched in gly residues; it reads MFRALMGGGR. Disordered regions lie at residues 1–270, 286–315, 331–365, 510–555, 596–712, 800–901, 913–944, 1027–1145, 1164–1297, 1310–1398, 1432–1993, 2067–2146, 2165–2207, 2233–3065, 3077–3894, 3910–4034, 4072–4128, 4238–4421, 4442–4463, 4509–4698, 4733–4850, and 4910–5052; these read MFRA…SSMG, EVDPAPGRPDRPTAGTTSEPPKPSNTTFGI, LPLPASPTSPPEPVPTTAPYAPPVTSSTTKPPHTH, SRDA…KKSS, TESV…DISQ, AATS…FPTG, ALASTQDRDSRLPRQHASSSSGSLQHVAPVPT, NRPH…KDSF, VLSG…GYRD, PTPP…RYVS, EDPT…TSVE, SELL…VNAF, NRLS…SPPA, PEAA…SQPI, MAEE…EIVS, EEKA…DTGL, KFKQ…EEPL, EAAL…SNQA, PRPLEVEPAASEVYQGATDEND, LRRQ…TSNT, KTDG…VEQA, and ALTV…RHRR. The interval 1–1100 is woronin bodies-binding region; it reads MFRALMGGGR…RASGVQLIDR (1100 aa). The segment covering 14 to 23 has biased composition (low complexity); it reads SRSTTSSSKS. 2 stretches are compositionally biased toward basic and acidic residues: residues 42–51 and 89–167; these read SRGDDRDRGL and VEHD…ERSR. Residues 299-313 show a composition bias toward polar residues; it reads AGTTSEPPKPSNTTF. Pro residues predominate over residues 334 to 352; sequence PASPTSPPEPVPTTAPYAP. The segment covering 514 to 523 has biased composition (basic residues); it reads PRKHHYRQRR. Residues 598–607 are compositionally biased toward polar residues; that stretch reads SVSTARRSQT. The span at 639 to 655 shows a compositional bias: basic residues; sequence HRSRSRSHSSSRNRRHS. Positions 660–674 are enriched in low complexity; that stretch reads AAVGAAVGSGAIALA. The segment covering 682–698 has biased composition (basic residues); the sequence is SRSRSRSRFPRKSKGRK. The segment covering 809-825 has biased composition (basic and acidic residues); the sequence is RAGEILVAKETRSRHSD. Low complexity-rich tracts occupy residues 842 to 851 and 862 to 880; these read GDQSSSSVSS and GSDESQSSDSGTSKWGWRW. Residues 881-891 show a composition bias toward basic residues; that stretch reads GSKKNKKKKRA. Composition is skewed to basic and acidic residues over residues 1068–1091, 1098–1145, 1178–1198, 1207–1226, 1356–1365, 1375–1387, 1447–1462, and 1478–1488; these read LTKEQADKERRMDRLEQLKRDAER, IDRD…KDSF, SQRRHEERRQQRRAERRRGSE, SKSERAQETTDYLPEERQPE, WGEHKTHEYE, SVDHETTREREQP, GRVEYRDPWVETESKS, and EEKAPSSRVIE. Low complexity predominate over residues 1506–1516; that stretch reads QESSEPQTRTS. Composition is skewed to basic and acidic residues over residues 1521-1536, 1549-1559, and 1572-1594; these read VIDRLSEKQDERDGSR, GKERDESELRA, and EELRSDPKRDVDSRDDGDVDRRS. Residues 1639–1648 are compositionally biased toward basic residues; it reads KKKRRKRRSK. Composition is skewed to basic and acidic residues over residues 1672–1686, 1700–1773, and 1788–1800; these read EKLKSMDDKDKEKKA, EPVD…QRRE, and KSGEYEKDRKLSE. Low complexity-rich tracts occupy residues 1867 to 1876 and 1889 to 1898; these read PAPRSRSRPA and SQSSRRSSIL. Residues 1950 to 1975 show a composition bias toward basic and acidic residues; the sequence is KNSREMRPLWLVERHGPGHGEHKLEE. 2 stretches are compositionally biased toward polar residues: residues 1984–1993 and 2121–2130; these read KTSSANTSVE and TPQNNVTAAS. Composition is skewed to basic and acidic residues over residues 2187-2196, 2269-2279, and 2307-2320; these read DADRTHKPIA, VPRDDKRRDSV, and GENKELPSEAKNEN. The span at 2321–2331 shows a compositional bias: polar residues; that stretch reads ANDNSQAQTEQ. Positions 2344–2355 are enriched in basic residues; sequence AKKKKKKNKKKR. The segment covering 2358 to 2370 has biased composition (polar residues); it reads MDSNTQEPTTPVD. Over residues 2427 to 2441 the composition is skewed to basic and acidic residues; that stretch reads DVEKAIEAPDVRKEL. The span at 2449–2461 shows a compositional bias: low complexity; the sequence is APEDTPAEPTAET. Positions 2473-2484 are enriched in basic residues; the sequence is KKSKKKKKKKNK. Residues 2494–2525 are compositionally biased toward polar residues; that stretch reads DPASTETPEASAANSQVVAAEQVESTLETTQP. 3 stretches are compositionally biased toward basic and acidic residues: residues 2580-2590, 2647-2661, and 2677-2691; these read NQAKELPHPEE, PEDKNGEAEQADLKS, and ALDKELSEISERPAE. Low complexity predominate over residues 2719–2734; it reads EEPTPTAAELETPLSR. The span at 2735 to 2747 shows a compositional bias: basic residues; that stretch reads KNSKKNKKKNKRK. Over residues 2796-2812 the composition is skewed to basic and acidic residues; sequence DENKGESRDVQAVKEET. Basic residues predominate over residues 2874 to 2884; the sequence is KKKAKKKKNRK. The segment covering 2885 to 2894 has biased composition (polar residues); sequence TANVSESQPE. 2 stretches are compositionally biased toward basic residues: residues 3003–3013 and 3089–3100; these read KKSKKNKKKKQ and KKTKKEKKKKRQ. Over residues 3145–3172 the composition is skewed to basic and acidic residues; that stretch reads AIEHAEAAAEHSQEQPNKDVTLHADHSP. The span at 3248-3268 shows a compositional bias: low complexity; that stretch reads PAMEGGAAAEELVAVEPDVLE. A compositionally biased stretch (polar residues) spans 3293-3303; the sequence is ELVNAETTQKT. Residues 3329–3341 are compositionally biased toward basic residues; sequence SKKKDKKKKKKRQ. Basic and acidic residues predominate over residues 3347-3367; that stretch reads DEQRSSTKEEPTAEFSSDHVP. Low complexity-rich tracts occupy residues 3397 to 3409 and 3422 to 3435; these read TQTAAEPTPSSAS and ESTQEPAAEEAQTA. Residues 3436–3450 are compositionally biased toward basic residues; the sequence is KSKKKAKKDKKKRKS. Positions 3480-3495 are enriched in basic and acidic residues; the sequence is EGPKPGDKPTSPKDSS. A compositionally biased stretch (low complexity) spans 3547–3564; the sequence is EEQAVVEETVAPPVVDEA. Polar residues-rich tracts occupy residues 3565 to 3580 and 3604 to 3613; these read SQLQEQKVSSETLWSE and VSPSLENNEG. Composition is skewed to basic residues over residues 3642-3652 and 3716-3730; these read KSKKNKKKKKR and KAKKKAKKKDKKRQS. The span at 3768–3787 shows a compositional bias: polar residues; that stretch reads TFSQETSETISTEAKSSEPS. Positions 3800–3819 are enriched in basic and acidic residues; sequence KENQSHDTEPHGGNDKDLTW. Over residues 3823–3837 the composition is skewed to polar residues; the sequence is MVSSQVEQQQGTPSD. Residues 3876-3893 are compositionally biased toward basic and acidic residues; sequence DRLERSGEEGTRVKKEIV. 2 stretches are compositionally biased toward polar residues: residues 3915 to 3925 and 3965 to 3980; these read ISSQGEDTIQV and KDQFTSIEVNDPSQSK. The span at 4010 to 4020 shows a compositional bias: acidic residues; it reads TSQDDSVDAVQ. The segment covering 4111 to 4123 has biased composition (basic and acidic residues); it reads ESRENKFKEKQLA. The span at 4244-4255 shows a compositional bias: basic residues; that stretch reads KNSKKKSKKAKK. The segment covering 4328 to 4345 has biased composition (polar residues); it reads LGQTPNMDNQTDDVQSTE. Basic residues predominate over residues 4378 to 4391; the sequence is KLSKKDRRKAKKKS. The span at 4392 to 4406 shows a compositional bias: basic and acidic residues; it reads AKDAIEPSDEPELRN. Positions 4495 to 5538 are septal pore-binding region; the sequence is AIAEFDETAI…SSTMDISNVI (1044 aa). A compositionally biased stretch (polar residues) spans 4554–4570; that stretch reads TEQSAGLQAKSVSSQGA. 2 stretches are compositionally biased toward basic and acidic residues: residues 4574 to 4591 and 4660 to 4673; these read IQDDMQHPENRLARDQTK and EESHLQSQQDEKGP. A compositionally biased stretch (low complexity) spans 4940-4954; the sequence is SSVSSVKSVQSTHSV. The span at 4966-4988 shows a compositional bias: polar residues; it reads RNTSGDLRAASQAQESHGTQPHA. Pro residues predominate over residues 4989–4998; sequence TPQPPQPPPS. Residues 5050 to 5223 adopt a coiled-coil conformation; it reads HRRSMQHLQE…QQQIAASLHD (174 aa).

Binds directly or indirectly to the Woronin body major protein hexA.

It is found in the cell septum. In terms of biological role, acts as the tether and is essential for anchoring of Woronin bodies at the septal pore. In damaged hyphae, Woronin bodies occlude septal pores in order to separate intact from damaged compartments. This is Leashin from Aspergillus fumigatus (strain ATCC MYA-4609 / CBS 101355 / FGSC A1100 / Af293) (Neosartorya fumigata).